We begin with the raw amino-acid sequence, 206 residues long: Ribosomal RNA small subunit methyltransferase G (206 aa).

Residues Gly-73, Leu-78, 124–125, and Arg-139 contribute to the S-adenosyl-L-methionine site; that span reads VE.

This sequence belongs to the methyltransferase superfamily. RNA methyltransferase RsmG family.

The protein localises to the cytoplasm. The enzyme catalyses guanosine(527) in 16S rRNA + S-adenosyl-L-methionine = N(7)-methylguanosine(527) in 16S rRNA + S-adenosyl-L-homocysteine. In terms of biological role, specifically methylates the N7 position of guanine in position 527 of 16S rRNA. The chain is Ribosomal RNA small subunit methyltransferase G from Pectobacterium carotovorum subsp. carotovorum (strain PC1).